Here is a 273-residue protein sequence, read N- to C-terminus: Dermonecrotic toxin LdSicTox-alphaIB1aii (273 aa).

Histidine 5 is a catalytic residue. Positions 25 and 27 each coordinate Mg(2+). The active-site Nucleophile is histidine 41. 2 disulfide bridges follow: cysteine 45/cysteine 51 and cysteine 47/cysteine 190. Mg(2+) is bound at residue aspartate 85. N-linked (GlcNAc...) asparagine glycosylation is present at asparagine 250.

It belongs to the arthropod phospholipase D family. Class II subfamily. Mg(2+) is required as a cofactor. As to expression, expressed by the venom gland.

The protein localises to the secreted. The enzyme catalyses an N-(acyl)-sphingosylphosphocholine = an N-(acyl)-sphingosyl-1,3-cyclic phosphate + choline. The catalysed reaction is an N-(acyl)-sphingosylphosphoethanolamine = an N-(acyl)-sphingosyl-1,3-cyclic phosphate + ethanolamine. It carries out the reaction a 1-acyl-sn-glycero-3-phosphocholine = a 1-acyl-sn-glycero-2,3-cyclic phosphate + choline. It catalyses the reaction a 1-acyl-sn-glycero-3-phosphoethanolamine = a 1-acyl-sn-glycero-2,3-cyclic phosphate + ethanolamine. In terms of biological role, dermonecrotic toxins cleave the phosphodiester linkage between the phosphate and headgroup of certain phospholipids (sphingolipid and lysolipid substrates), forming an alcohol (often choline) and a cyclic phosphate. This toxin acts on sphingomyelin (SM). It may also act on ceramide phosphoethanolamine (CPE), lysophosphatidylcholine (LPC) and lysophosphatidylethanolamine (LPE), but not on lysophosphatidylserine (LPS), and lysophosphatidylglycerol (LPG). It acts by transphosphatidylation, releasing exclusively cyclic phosphate products as second products. Induces dermonecrosis, hemolysis, increased vascular permeability, edema, inflammatory response, and platelet aggregation. The sequence is that of Dermonecrotic toxin LdSicTox-alphaIB1aii from Loxosceles deserta (Desert recluse spider).